The primary structure comprises 283 residues: Elongation factor Ts (283 aa).

The segment at 79–82 is involved in Mg(2+) ion dislocation from EF-Tu; sequence TDFV.

It belongs to the EF-Ts family.

It localises to the cytoplasm. Its function is as follows. Associates with the EF-Tu.GDP complex and induces the exchange of GDP to GTP. It remains bound to the aminoacyl-tRNA.EF-Tu.GTP complex up to the GTP hydrolysis stage on the ribosome. The protein is Elongation factor Ts of Shewanella oneidensis (strain ATCC 700550 / JCM 31522 / CIP 106686 / LMG 19005 / NCIMB 14063 / MR-1).